A 173-amino-acid polypeptide reads, in one-letter code: Ribosome maturation factor RimM (173 aa).

Residues 95–169 (PDEFYDHELE…TIVIDPPEGL (75 aa)) form the PRC barrel domain.

This sequence belongs to the RimM family. Binds ribosomal protein uS19.

It localises to the cytoplasm. In terms of biological role, an accessory protein needed during the final step in the assembly of 30S ribosomal subunit, possibly for assembly of the head region. Essential for efficient processing of 16S rRNA. May be needed both before and after RbfA during the maturation of 16S rRNA. It has affinity for free ribosomal 30S subunits but not for 70S ribosomes. This chain is Ribosome maturation factor RimM, found in Mycolicibacterium smegmatis (strain ATCC 700084 / mc(2)155) (Mycobacterium smegmatis).